We begin with the raw amino-acid sequence, 58 residues long: Pepsin-1 (58 aa).

Residues 1 to 41 (LLQVPLEKGQSAREYLQEQGLWEQYRLKYPYNPMAKFDPSF) constitute a propeptide, activation peptide.

It belongs to the peptidase A1 family.

This Thunnus orientalis (North Pacific bluefin tuna) protein is Pepsin-1.